Here is a 185-residue protein sequence, read N- to C-terminus: Probable chorismate pyruvate-lyase (185 aa).

3 residues coordinate substrate: Arg80, Leu118, and Glu170.

This sequence belongs to the UbiC family.

It localises to the cytoplasm. It carries out the reaction chorismate = 4-hydroxybenzoate + pyruvate. It functions in the pathway cofactor biosynthesis; ubiquinone biosynthesis. In terms of biological role, removes the pyruvyl group from chorismate, with concomitant aromatization of the ring, to provide 4-hydroxybenzoate (4HB) for the ubiquinone pathway. The protein is Probable chorismate pyruvate-lyase of Pseudomonas putida (strain ATCC 47054 / DSM 6125 / CFBP 8728 / NCIMB 11950 / KT2440).